We begin with the raw amino-acid sequence, 368 residues long: Methionine import ATP-binding protein MetN (368 aa).

Residues 5-260 (IELNNLSVQF…PKEALTKQFI (256 aa)) enclose the ABC transporter domain. 41 to 48 (GYSGAGKS) contacts ATP.

The protein belongs to the ABC transporter superfamily. Methionine importer (TC 3.A.1.24) family. In terms of assembly, the complex is composed of two ATP-binding proteins (MetN), two transmembrane proteins (MetI) and a solute-binding protein (MetQ).

The protein resides in the cell membrane. It catalyses the reaction L-methionine(out) + ATP + H2O = L-methionine(in) + ADP + phosphate + H(+). The enzyme catalyses D-methionine(out) + ATP + H2O = D-methionine(in) + ADP + phosphate + H(+). Part of the ABC transporter complex MetNIQ involved in methionine import. Responsible for energy coupling to the transport system. This is Methionine import ATP-binding protein MetN from Lactococcus lactis subsp. cremoris (strain SK11).